The chain runs to 88 residues: Small ribosomal subunit protein bS20 (88 aa).

Residues 1–25 (MANTAQALKRIRQTNKARAQNASQR) form a disordered region. Over residues 16 to 25 (KARAQNASQR) the composition is skewed to polar residues.

This sequence belongs to the bacterial ribosomal protein bS20 family.

Its function is as follows. Binds directly to 16S ribosomal RNA. This chain is Small ribosomal subunit protein bS20, found in Dichelobacter nodosus (strain VCS1703A).